The following is a 198-amino-acid chain: Probable GTP-binding protein EngB (198 aa).

Positions 27–198 (DLPEVALAGR…ESWDTILSEL (172 aa)) constitute an EngB-type G domain. GTP contacts are provided by residues 35–42 (GRSNVGKS), 62–66 (GKTQL), 80–83 (DVPG), 147–150 (TKAD), and 179–181 (FSS). Residues serine 42 and threonine 64 each contribute to the Mg(2+) site.

This sequence belongs to the TRAFAC class TrmE-Era-EngA-EngB-Septin-like GTPase superfamily. EngB GTPase family. It depends on Mg(2+) as a cofactor.

Necessary for normal cell division and for the maintenance of normal septation. The sequence is that of Probable GTP-binding protein EngB from Streptococcus agalactiae serotype III (strain NEM316).